We begin with the raw amino-acid sequence, 761 residues long: Neurotrypsin (761 aa).

A signal peptide spans 1-21; sequence MALARCVLAVILGVLSEVARA. Residues 26 to 88 form a disordered region; sequence HSPLHRPHPS…PTISRRCGAG (63 aa). The segment covering 54 to 63 has biased composition (pro residues); that stretch reads TPRFPLPPRA. Positions 85 to 157 constitute a Kringle domain; sequence CGAGEPWGNA…GKVDWGYCDC (73 aa). Intrachain disulfides connect cysteine 85–cysteine 157, cysteine 101–cysteine 141, cysteine 130–cysteine 155, cysteine 191–cysteine 255, cysteine 204–cysteine 265, cysteine 235–cysteine 245, cysteine 298–cysteine 361, cysteine 311–cysteine 371, cysteine 341–cysteine 351, cysteine 411–cysteine 475, cysteine 424–cysteine 485, cysteine 455–cysteine 465, cysteine 505–cysteine 636, cysteine 547–cysteine 563, cysteine 651–cysteine 717, cysteine 680–cysteine 694, and cysteine 707–cysteine 736. Asparagine 93 carries an N-linked (GlcNAc...) asparagine glycan. SRCR domains are found at residues 166–267, 273–373, and 386–487; these read IRLV…SCAP, IRLS…TCYP, and IRLM…ICDY. The segment at 505–516 is zymogen activation region; that stretch reads CGLRLLHRRQKR. The Peptidase S1 domain maps to 517 to 760; the sequence is IIGGNNSLRG…FVPWIKSVTS (244 aa). Residue asparagine 521 is glycosylated (N-linked (GlcNAc...) asparagine). The active-site Charge relay system is histidine 562. A glycan (N-linked (GlcNAc...) asparagine) is linked at asparagine 569. The Charge relay system role is filled by aspartate 612. The Charge relay system role is filled by serine 711.

Belongs to the peptidase S1 family.

The protein localises to the secreted. Its function is as follows. Plays a role in neuronal plasticity and the proteolytic action may subserve structural reorganizations associated with learning and memory operations. This chain is Neurotrypsin (Prss12), found in Rattus norvegicus (Rat).